A 279-amino-acid polypeptide reads, in one-letter code: Ribosomal RNA small subunit methyltransferase J (279 aa).

S-adenosyl-L-methionine contacts are provided by residues 138-139 (ER) and D194.

It belongs to the methyltransferase superfamily. RsmJ family.

It is found in the cytoplasm. The enzyme catalyses guanosine(1516) in 16S rRNA + S-adenosyl-L-methionine = N(2)-methylguanosine(1516) in 16S rRNA + S-adenosyl-L-homocysteine + H(+). Specifically methylates the guanosine in position 1516 of 16S rRNA. The sequence is that of Ribosomal RNA small subunit methyltransferase J from Acinetobacter baumannii (strain ATCC 17978 / DSM 105126 / CIP 53.77 / LMG 1025 / NCDC KC755 / 5377).